A 133-amino-acid polypeptide reads, in one-letter code: L-ectoine synthase (133 aa).

Belongs to the ectoine synthase family.

The enzyme catalyses (2S)-4-acetamido-2-aminobutanoate = L-ectoine + H2O. It functions in the pathway amine and polyamine biosynthesis; ectoine biosynthesis; L-ectoine from L-aspartate 4-semialdehyde: step 3/3. Catalyzes the circularization of gamma-N-acetyl-alpha,gamma-diaminobutyric acid (ADABA) to ectoine (1,4,5,6-tetrahydro-2-methyl-4-pyrimidine carboxylic acid), which is an excellent osmoprotectant. The sequence is that of L-ectoine synthase from Bordetella petrii (strain ATCC BAA-461 / DSM 12804 / CCUG 43448).